The following is a 76-amino-acid chain: Rhesus theta defensin-1/2 subunit B (76 aa).

A signal peptide spans 1–22; it reads MRTFALLTAMLLLVALHAQAEA. Residues 23–64 constitute a propeptide that is removed on maturation; sequence RQARADEAAAQQQPGADDQGMAHSFTRPENAALPLSESARGL. The segment at 25–54 is disordered; that stretch reads ARADEAAAQQQPGADDQGMAHSFTRPENAA. Residues 30–44 show a composition bias toward low complexity; sequence AAAQQQPGADDQGMA. A Cyclopeptide (Arg-Cys) (interchain with C-73 in subunit A); in form RTD-1 cross-link involves residue R65. R65 is covalently cross-linked (Cyclopeptide (Arg-Cys) (interchain with C-73 in subunit B); in form RTD-2). An intrachain disulfide couples C68 to C73. A Cyclopeptide (Cys-Arg) (interchain with R-65 in subunit A); in form RTD-1 cross-link involves residue C73. A Cyclopeptide (Cys-Arg) (interchain with R-65 in subunit B); in form RTD-2 cross-link involves residue C73. The propeptide occupies 74 to 76; that stretch reads QLL.

The protein belongs to the alpha-defensin family. Theta subfamily. As to quaternary structure, RTD-1 is a cyclic heterodimer composed of subunits A and B; disulfide-linked. RTD-2 is a cyclic homodimer composed of two subunits B; disulfide-linked. Forms a cyclic peptide with 1 subunit B (RTD-2) or with 1 subunit A (RTD-1). An additional intersubunit disulfide bond is formed. In terms of tissue distribution, RTD-1 is expressed in bone marrow. Detected in promyelocytes, myelocytes and mature neutrophils and monocytes.

Functionally, RTD-1 and RTD-2 have similar antimicrobial activities against the Gram-positive bacteria S.aureus 502A and L.monocytogenes, the Gram-negative bacterium S.typhimurium, and the fungi C.albicans 16820 and C.neoformans 271A. RTD-2 is 2-3-fold less active than RTD-1 against E.coli ML35. This is Rhesus theta defensin-1/2 subunit B (RTD1B) from Macaca mulatta (Rhesus macaque).